The sequence spans 259 residues: L-arginine-binding protein (259 aa).

A signal peptide spans 1 to 21; it reads MKKLALLGALALSVLSLPTFA.

It belongs to the bacterial solute-binding protein 3 family.

It localises to the periplasm. Its function is as follows. Binds L-arginine with high affinity. Shows no measurable affinity for L-ornithine. This chain is L-arginine-binding protein, found in Pseudomonas aeruginosa (strain ATCC 15692 / DSM 22644 / CIP 104116 / JCM 14847 / LMG 12228 / 1C / PRS 101 / PAO1).